A 734-amino-acid chain; its full sequence is Photosystem I P700 chlorophyll a apoprotein A2 (734 aa).

Helical transmembrane passes span Ile-46 to Ala-69, Leu-135 to Gln-158, Leu-175 to Ile-199, Ile-273 to Tyr-291, Ile-330 to Tyr-353, Ala-369 to Ile-395, Ala-417 to His-439, and Phe-517 to Val-535. The [4Fe-4S] cluster site is built by Cys-559 and Cys-568. 2 consecutive transmembrane segments (helical) span residues Ala-575–Trp-596 and Leu-643–Ile-665. 3 residues coordinate chlorophyll a: His-654, Met-662, and Tyr-670. Position 671 (Trp-671) interacts with phylloquinone. Residues Leu-707–Ala-727 traverse the membrane as a helical segment.

The protein belongs to the PsaA/PsaB family. As to quaternary structure, the PsaA/B heterodimer binds the P700 chlorophyll special pair and subsequent electron acceptors. PSI consists of a core antenna complex that captures photons, and an electron transfer chain that converts photonic excitation into a charge separation. The eukaryotic PSI reaction center is composed of at least 11 subunits. P700 is a chlorophyll a/chlorophyll a' dimer, A0 is one or more chlorophyll a, A1 is one or both phylloquinones and FX is a shared 4Fe-4S iron-sulfur center. serves as cofactor.

It is found in the plastid. Its subcellular location is the chloroplast thylakoid membrane. The catalysed reaction is reduced [plastocyanin] + hnu + oxidized [2Fe-2S]-[ferredoxin] = oxidized [plastocyanin] + reduced [2Fe-2S]-[ferredoxin]. Functionally, psaA and PsaB bind P700, the primary electron donor of photosystem I (PSI), as well as the electron acceptors A0, A1 and FX. PSI is a plastocyanin-ferredoxin oxidoreductase, converting photonic excitation into a charge separation, which transfers an electron from the donor P700 chlorophyll pair to the spectroscopically characterized acceptors A0, A1, FX, FA and FB in turn. Oxidized P700 is reduced on the lumenal side of the thylakoid membrane by plastocyanin. The polypeptide is Photosystem I P700 chlorophyll a apoprotein A2 (Eucalyptus globulus subsp. globulus (Tasmanian blue gum)).